Reading from the N-terminus, the 116-residue chain is MNTVRVAFLLVFVLAVSLGQADKDENRMEMQEKTEQGKSYLDFAENLLLQKLEELEAKLLEEDSEESRNSRQKRCIGEGVPCDENDPRCCSGLVCLKPTLHGIWYKSYYCYKKRSA.

The first 21 residues, 1–21, serve as a signal peptide directing secretion; sequence MNTVRVAFLLVFVLAVSLGQA. A propeptide spanning residues 22–74 is cleaved from the precursor; that stretch reads DKDENRMEMQEKTEQGKSYLDFAENLLLQKLEELEAKLLEEDSEESRNSRQKR. The interval 61-83 is disordered; that stretch reads EEDSEESRNSRQKRCIGEGVPCD. Disulfide bonds link Cys-75-Cys-90, Cys-82-Cys-95, and Cys-89-Cys-110.

Belongs to the neurotoxin 14 (magi-1) family. 01 (HNTX-16) subfamily. In terms of tissue distribution, expressed by the venom gland.

The protein localises to the secreted. Functionally, probable ion channel inhibitor. This is U11-theraphotoxin-Hhn1b from Cyriopagopus hainanus (Chinese bird spider).